The sequence spans 416 residues: Gamma-glutamyl phosphate reductase (416 aa).

It belongs to the gamma-glutamyl phosphate reductase family.

The protein resides in the cytoplasm. The enzyme catalyses L-glutamate 5-semialdehyde + phosphate + NADP(+) = L-glutamyl 5-phosphate + NADPH + H(+). It functions in the pathway amino-acid biosynthesis; L-proline biosynthesis; L-glutamate 5-semialdehyde from L-glutamate: step 2/2. Catalyzes the NADPH-dependent reduction of L-glutamate 5-phosphate into L-glutamate 5-semialdehyde and phosphate. The product spontaneously undergoes cyclization to form 1-pyrroline-5-carboxylate. This Streptococcus uberis (strain ATCC BAA-854 / 0140J) protein is Gamma-glutamyl phosphate reductase.